Consider the following 312-residue polypeptide: Ribonuclease Z (312 aa).

Residues His63, His65, Asp67, His68, His140, Asp211, and His269 each contribute to the Zn(2+) site. Catalysis depends on Asp67, which acts as the Proton acceptor.

This sequence belongs to the RNase Z family. Homodimer. Requires Zn(2+) as cofactor.

It catalyses the reaction Endonucleolytic cleavage of RNA, removing extra 3' nucleotides from tRNA precursor, generating 3' termini of tRNAs. A 3'-hydroxy group is left at the tRNA terminus and a 5'-phosphoryl group is left at the trailer molecule.. Its function is as follows. Zinc phosphodiesterase, which displays some tRNA 3'-processing endonuclease activity. Probably involved in tRNA maturation, by removing a 3'-trailer from precursor tRNA. The sequence is that of Ribonuclease Z from Anoxybacillus flavithermus (strain DSM 21510 / WK1).